The chain runs to 134 residues: ATP synthase epsilon chain, chloroplastic (134 aa).

It belongs to the ATPase epsilon chain family. In terms of assembly, F-type ATPases have 2 components, CF(1) - the catalytic core - and CF(0) - the membrane proton channel. CF(1) has five subunits: alpha(3), beta(3), gamma(1), delta(1), epsilon(1). CF(0) has three main subunits: a, b and c.

It is found in the plastid. It localises to the chloroplast thylakoid membrane. Functionally, produces ATP from ADP in the presence of a proton gradient across the membrane. The protein is ATP synthase epsilon chain, chloroplastic of Chlorella vulgaris (Green alga).